The primary structure comprises 162 residues: Protein archease (162 aa).

Ca(2+) contacts are provided by Asp-34, Asp-161, and Ile-162.

The protein belongs to the archease family. As to quaternary structure, component of the tRNA-splicing ligase complex.

Its function is as follows. Component of the tRNA-splicing ligase complex required to facilitate the enzymatic turnover of catalytic subunit RTCB. Together with ddx1, acts by facilitating the guanylylation of RTCB, a key intermediate step in tRNA ligation. In Ictalurus punctatus (Channel catfish), this protein is Protein archease.